The sequence spans 55 residues: Large ribosomal subunit protein bL33B (55 aa).

The protein belongs to the bacterial ribosomal protein bL33 family.

The protein is Large ribosomal subunit protein bL33B of Salinispora arenicola (strain CNS-205).